Consider the following 324-residue polypeptide: Pseudouridine-5'-phosphate glycosidase (324 aa).

Glu43 serves as the catalytic Proton donor. The substrate site is built by Lys104 and Val124. Asp156 provides a ligand contact to Mn(2+). Substrate is bound at residue 158-160; sequence SAD. Catalysis depends on Lys177, which acts as the Nucleophile.

Belongs to the pseudouridine-5'-phosphate glycosidase family. As to quaternary structure, homotrimer. Mn(2+) serves as cofactor.

The catalysed reaction is D-ribose 5-phosphate + uracil = psi-UMP + H2O. Its function is as follows. Catalyzes the reversible cleavage of pseudouridine 5'-phosphate (PsiMP) to ribose 5-phosphate and uracil. Functions biologically in the cleavage direction, as part of a pseudouridine degradation pathway. The chain is Pseudouridine-5'-phosphate glycosidase from Salinispora tropica (strain ATCC BAA-916 / DSM 44818 / JCM 13857 / NBRC 105044 / CNB-440).